The primary structure comprises 586 residues: Phosphomethylpyrimidine synthase (586 aa).

Positions 1-33 are disordered; it reads MKQSVSAEQIELKSSLPGSKKVYVDGPREGMKV. Positions 22-33 are enriched in basic and acidic residues; the sequence is VYVDGPREGMKV. Substrate contacts are provided by residues Asn-193, Met-222, Tyr-251, His-287, 307–309, 348–351, and Glu-387; these read SRG and DGLR. His-391 is a Zn(2+) binding site. Residue Tyr-414 participates in substrate binding. A Zn(2+)-binding site is contributed by His-455. Residues Cys-535, Cys-538, and Cys-543 each contribute to the [4Fe-4S] cluster site.

It belongs to the ThiC family. [4Fe-4S] cluster serves as cofactor.

It carries out the reaction 5-amino-1-(5-phospho-beta-D-ribosyl)imidazole + S-adenosyl-L-methionine = 4-amino-2-methyl-5-(phosphooxymethyl)pyrimidine + CO + 5'-deoxyadenosine + formate + L-methionine + 3 H(+). It participates in cofactor biosynthesis; thiamine diphosphate biosynthesis. Catalyzes the synthesis of the hydroxymethylpyrimidine phosphate (HMP-P) moiety of thiamine from aminoimidazole ribotide (AIR) in a radical S-adenosyl-L-methionine (SAM)-dependent reaction. The protein is Phosphomethylpyrimidine synthase of Bacillus cereus (strain B4264).